A 669-amino-acid chain; its full sequence is Soluble guanylate cyclase 89Db (669 aa).

His-104 contributes to the heme binding site. Residues 430 to 458 (QHCSKLEIMFEKEEQRSDELEKSLELADS) adopt a coiled-coil conformation. A Guanylate cyclase domain is found at 494–620 (SVIFIEVMNI…DTVNTASRME (127 aa)).

The protein belongs to the adenylyl cyclase class-4/guanylyl cyclase family. Heterodimer; with Gyc88E, in the presence of magnesium or manganese. Heme serves as cofactor. In terms of tissue distribution, expressed in embryos in a segmental pattern in the ventral nerve cord (VNC) and in the brain, beginning at stage 13 and continuing through to stage 17. Colocalized with Gyc-89Db in several peripheral neurons that innervate trachea, basiconical sensilla and the sensory cones in the posterior segments of the embryo. Expression in wandering 3rd instar larvae is most prominent in a small cluster of cells located in the anterior medial region of each brain lobe. In the VNC, expression is found in scattered cells both laterally and at the midline.

It localises to the cytoplasm. It carries out the reaction GTP = 3',5'-cyclic GMP + diphosphate. Probably not activated by nitric oxide (NO). Heterodimer exhibits some stimulation, compounds (SIN-1 and two of the NONOates) that were ineffective at stimulating Gyc-88E homodimer did stimulate the heterodimer. Heterodimers with Gyc88E are activated in response to changing oxygen concentrations, alerting flies to hypoxic environments. Under normal oxygen concentrations, oxygen binds to the heme group and results in low levels of guanylyl cyclase activity. When exposed to reduced oxygen concentrations, the oxygen dissociates from the heme group resulting in activation of the enzyme. The sequence is that of Soluble guanylate cyclase 89Db from Drosophila melanogaster (Fruit fly).